We begin with the raw amino-acid sequence, 497 residues long: tRNA-2-methylthio-N(6)-dimethylallyladenosine synthase (497 aa).

The MTTase N-terminal domain maps to 44–161 (KKVFVTTQGC…LPELYDQSHQ (118 aa)). The [4Fe-4S] cluster site is built by Cys53, Cys90, Cys124, Cys205, Cys209, and Cys212. The Radical SAM core domain maps to 191–423 (RVEGFKAFVS…QKVIIDSTLA (233 aa)). One can recognise a TRAM domain in the interval 426 to 494 (HEMVGTTTRV…PHMVKGEIEA (69 aa)).

This sequence belongs to the methylthiotransferase family. MiaB subfamily. As to quaternary structure, monomer. The cofactor is [4Fe-4S] cluster.

It is found in the cytoplasm. It carries out the reaction N(6)-dimethylallyladenosine(37) in tRNA + (sulfur carrier)-SH + AH2 + 2 S-adenosyl-L-methionine = 2-methylsulfanyl-N(6)-dimethylallyladenosine(37) in tRNA + (sulfur carrier)-H + 5'-deoxyadenosine + L-methionine + A + S-adenosyl-L-homocysteine + 2 H(+). Catalyzes the methylthiolation of N6-(dimethylallyl)adenosine (i(6)A), leading to the formation of 2-methylthio-N6-(dimethylallyl)adenosine (ms(2)i(6)A) at position 37 in tRNAs that read codons beginning with uridine. The polypeptide is tRNA-2-methylthio-N(6)-dimethylallyladenosine synthase (Psychrobacter cryohalolentis (strain ATCC BAA-1226 / DSM 17306 / VKM B-2378 / K5)).